The following is a 179-amino-acid chain: Peptidyl-prolyl cis-trans isomerase A (179 aa).

The region spanning 15 to 178 (FFDITIGGVE…KPVVIANCGQ (164 aa)) is the PPIase cyclophilin-type domain.

It belongs to the cyclophilin-type PPIase family.

It localises to the cytoplasm. Its subcellular location is the cytosol. It catalyses the reaction [protein]-peptidylproline (omega=180) = [protein]-peptidylproline (omega=0). With respect to regulation, binds cyclosporin A (CsA). CsA mediates some of its effects via an inhibitory action on PPIase. Functionally, PPIase that catalyzes the cis-trans isomerization of proline imidic peptide bonds in oligopeptides and may therefore assist protein folding. The polypeptide is Peptidyl-prolyl cis-trans isomerase A (ppiA) (Dictyostelium discoideum (Social amoeba)).